The sequence spans 117 residues: Glycine cleavage system H-like protein (117 aa).

Residues 21 to 103 enclose the Lipoyl-binding domain; it reads IVKLGLSSQM…ESEGWFVVLQ (83 aa). Position 62 is an N6-lipoyllysine (Lys62).

Belongs to the GcvH family. (R)-lipoate serves as cofactor.

This Chlamydia trachomatis serovar L2 (strain ATCC VR-902B / DSM 19102 / 434/Bu) protein is Glycine cleavage system H-like protein.